A 223-amino-acid chain; its full sequence is Glutathione S-transferase alpha I (223 aa).

Met1 is modified (N-acetylmethionine). Ala2 carries the N-acetylalanine; in Glutathione S-transferase alpha I, N-terminally processed modification. A GST N-terminal domain is found at 3–83 (RKPLLHYFNG…YVANKHNLYG (81 aa)). At Lys4 the chain carries N6-succinyllysine. Glutathione-binding positions include Tyr9, Arg45, 54 to 55 (QV), and 67 to 68 (QT). In terms of domain architecture, GST C-terminal spans 85-208 (DMKERALIDM…QPGSQRKPPM (124 aa)).

It belongs to the GST superfamily. Alpha family. In terms of assembly, homodimer or heterodimer of GSTA1 and GSTA2. Liver and lung.

It is found in the cytoplasm. The enzyme catalyses RX + glutathione = an S-substituted glutathione + a halide anion + H(+). It catalyses the reaction prostaglandin A2 + glutathione = prostaglandin A2-S-(R)-glutathione. It carries out the reaction prostaglandin J2 + glutathione = prostaglandin J2-S-(R)-glutathione. The catalysed reaction is (13S)-hydroperoxy-(9Z,11E)-octadecadienoate + 2 glutathione = (13S)-hydroxy-(9Z,11E)-octadecadienoate + glutathione disulfide + H2O. The enzyme catalyses androst-5-ene-3,17-dione = androst-4-ene-3,17-dione. Functionally, glutathione S-transferase that catalyzes the nucleophilic attack of the sulfur atom of glutathione on the electrophilic groups of a wide range of exogenous and endogenous compounds. Involved in the formation of glutathione conjugates of both prostaglandin A2 (PGA2) and prostaglandin J2 (PGJ2). It also catalyzes the isomerization of D5-androstene-3,17-dione (AD) into D4-androstene-3,17-dione and may therefore play an important role in hormone biosynthesis. Through its glutathione-dependent peroxidase activity toward the fatty acid hydroperoxide (13S)-hydroperoxy-(9Z,11E)-octadecadienoate/13-HPODE it is also involved in the metabolism of oxidized linoleic acid. In Oryctolagus cuniculus (Rabbit), this protein is Glutathione S-transferase alpha I.